The following is a 139-amino-acid chain: uncharacterized protein (139 aa).

This is an uncharacterized protein from Homo sapiens (Human).